The primary structure comprises 199 residues: Outer-membrane lipoprotein LolB (199 aa).

The N-terminal stretch at 1–28 is a signal peptide; it reads MSVCPAPRSPVRWLHAFTLCLLLAVLAG. The N-palmitoyl cysteine moiety is linked to residue cysteine 29. Cysteine 29 is lipidated: S-diacylglycerol cysteine.

This sequence belongs to the LolB family. In terms of assembly, monomer.

It localises to the cell outer membrane. Functionally, plays a critical role in the incorporation of lipoproteins in the outer membrane after they are released by the LolA protein. This Bordetella parapertussis (strain 12822 / ATCC BAA-587 / NCTC 13253) protein is Outer-membrane lipoprotein LolB.